The sequence spans 537 residues: Protein swallow (537 aa).

Residues 344 to 406 (QPNAGKPKKN…SESSHPSSND (63 aa)) form a disordered region. 2 stretches are compositionally biased toward low complexity: residues 371–383 (NGNG…HSSS) and 392–406 (AAPN…SSND).

In terms of assembly, may be constituted of a homo- or heterodimer.

Its subcellular location is the nucleus. Its function is as follows. Has a role in localizing bicoid mRNA at the anterior margin of the oocyte during oogenesis, and a poorly characterized role in nuclear divisions in early embryogenesis. The chain is Protein swallow (swa) from Drosophila pseudoobscura pseudoobscura (Fruit fly).